A 248-amino-acid polypeptide reads, in one-letter code: Phycocyanobilin:ferredoxin oxidoreductase (248 aa).

Belongs to the HY2 family.

The catalysed reaction is (2R,3Z)-phycocyanobilin + 4 oxidized [2Fe-2S]-[ferredoxin] = biliverdin IXalpha + 4 reduced [2Fe-2S]-[ferredoxin] + 4 H(+). Catalyzes the four-electron reduction of biliverdin IX-alpha (2-electron reduction at both the A and D rings); the reaction proceeds via an isolatable 2-electron intermediate, 181,182-dihydrobiliverdin. In Synechocystis sp. (strain ATCC 27184 / PCC 6803 / Kazusa), this protein is Phycocyanobilin:ferredoxin oxidoreductase (pcyA).